The following is a 590-amino-acid chain: MSVDSSSTHRHRSVAARLVRLAAAGAAVIAAVGTAAAWAHAGAVQHRCIHDAMQARVRQSVARHHTAPGAVSAVGLSYVTLGAAPTVVRAANWGALRIAVSTEDLTDSAYHCARVGQRISTRDGRFAICTAEDILTDEKRDILVKYLIPQALQLHTERLKVRQVQDKWKVTGMGNEICGHFKVPPAHITDGLSNTDFVMYVASVPSEGDVLAWATTCQVFSDGHPAVGVINIPAANIASRYDQLVTRVVTHEMAHALGFSVVFFRDARILESISNVRHKDFDVPVINSSTAVAKAREQYGCGTLEYLEMEDQGGAGSAGSHIKMRNAQDELMAPASDAGYYSALTMAIFQDLGFYQADFSKAEEMPWGRNAGCAFLSEKCMEDGITKWPAMFCNENEVTMRCHTGRLSLGVCGLSSSDIPLPPYWQYFTDPLLAGISAFMDYCPVVVPFGDGSCAQRASEAGAPFKGFNVFSDAARCIDGAFRPKTTETVTNSYAGLCANVRCDTATRTYSVQVHGGSGYANCTPGLRVELSTVSSAFEEGGYITCPPYVEVCQGNVQAAKDGGNAAAGRRGPRAAATALLVAALLAVAL.

An N-terminal signal peptide occupies residues 1–39 (MSVDSSSTHRHRSVAARLVRLAAAGAAVIAAVGTAAAWA). Residues 40 to 87 (HAGAVQHRCIHDAMQARVRQSVARHHTAPGAVSAVGLSYVTLGAAPTV) constitute a propeptide, activation peptide. Disulfide bonds link Cys-112–Cys-129 and Cys-178–Cys-217. Zn(2+) is bound at residue His-251. Glu-252 is a catalytic residue. His-255 is a binding site for Zn(2+). Asn-287 carries an N-linked (GlcNAc...) asparagine glycan. Intrachain disulfides connect Cys-301/Cys-373, Cys-380/Cys-443, Cys-393/Cys-412, Cys-402/Cys-477, Cys-454/Cys-498, Cys-503/Cys-553, and Cys-523/Cys-546. Residue His-321 participates in Zn(2+) binding. Asn-565 carries GPI-anchor amidated asparagine lipidation. Residues 566–590 (AAAGRRGPRAAATALLVAALLAVAL) constitute a propeptide, removed in mature form.

This sequence belongs to the peptidase M8 family. Zn(2+) serves as cofactor.

The protein resides in the cell membrane. It catalyses the reaction Preference for hydrophobic residues at P1 and P1' and basic residues at P2' and P3'. A model nonapeptide is cleaved at -Ala-Tyr-|-Leu-Lys-Lys-.. Its function is as follows. Has an integral role during the infection of macrophages in the mammalian host. This Leishmania donovani protein is Leishmanolysin (gp63).